The following is a 286-amino-acid chain: MRYIRLCIISLLATLPLAVHASPQPLEQIKLSESQLSGRVGMIEMDLASGRTLTAWRADERFPMMSTFKVVLCGAVLARVDAGDEQLERKIHYRQQDLVDYSPVSEKHLADGMTVGELCAAAITMSDNSAANLLLATVGGPAGLTAFLRQIGDNVTRLDRWETELNEALPGDARNTTTPASMAATLRKLLTSQRLSARSQRQLLQWMVDDRVAGPLIRSVLPAGWFIADKTGAGERGARGIVALLGPNNKAERIVVIYLRDTPASMAERNQQIAGIGAALIEHWQR.

Residues 1-21 (MRYIRLCIISLLATLPLAVHA) form the signal peptide. S66 serves as the catalytic Acyl-ester intermediate. An intrachain disulfide couples C73 to C119. E164 acts as the Proton acceptor in catalysis. 230-232 (KTG) lines the substrate pocket.

It belongs to the class-A beta-lactamase family.

It carries out the reaction a beta-lactam + H2O = a substituted beta-amino acid. Functionally, SHV enzymes hydrolyze broad spectrum cephalosporins notably cefotaxime and ceftazidime. The protein is Beta-lactamase SHV-8 (bla) of Escherichia coli.